Here is a 471-residue protein sequence, read N- to C-terminus: 3-isopropylmalate dehydratase large subunit (471 aa).

Residues cysteine 347, cysteine 407, and cysteine 410 each coordinate [4Fe-4S] cluster.

Belongs to the aconitase/IPM isomerase family. LeuC type 1 subfamily. In terms of assembly, heterodimer of LeuC and LeuD. The cofactor is [4Fe-4S] cluster.

The catalysed reaction is (2R,3S)-3-isopropylmalate = (2S)-2-isopropylmalate. It functions in the pathway amino-acid biosynthesis; L-leucine biosynthesis; L-leucine from 3-methyl-2-oxobutanoate: step 2/4. Its function is as follows. Catalyzes the isomerization between 2-isopropylmalate and 3-isopropylmalate, via the formation of 2-isopropylmaleate. The chain is 3-isopropylmalate dehydratase large subunit from Buchnera aphidicola subsp. Acyrthosiphon pisum (strain APS) (Acyrthosiphon pisum symbiotic bacterium).